The following is a 289-amino-acid chain: Thymidylate synthase (289 aa).

Residues Arg26 and 151–152 contribute to the dUMP site; that span reads RR. Cys171 acts as the Nucleophile in catalysis. DUMP is bound by residues 191–194, Asn202, and 232–234; these read RSGD and HVY. A (6R)-5,10-methylene-5,6,7,8-tetrahydrofolate-binding site is contributed by Asp194. Ala288 serves as a coordination point for (6R)-5,10-methylene-5,6,7,8-tetrahydrofolate.

The protein belongs to the thymidylate synthase family. As to quaternary structure, homodimer.

It catalyses the reaction dUMP + (6R)-5,10-methylene-5,6,7,8-tetrahydrofolate = 7,8-dihydrofolate + dTMP. It functions in the pathway pyrimidine metabolism; dTTP biosynthesis. The polypeptide is Thymidylate synthase (Equus caballus (Horse)).